The chain runs to 258 residues: Large ribosomal subunit protein eL8z (258 aa).

Residues 1–20 form a disordered region; the sequence is MAPKRGGRAPVPAKKKTEKV.

This sequence belongs to the eukaryotic ribosomal protein eL8 family.

The sequence is that of Large ribosomal subunit protein eL8z (RPL7A-1) from Oryza sativa subsp. japonica (Rice).